The sequence spans 252 residues: Phosphate import ATP-binding protein PstB 1 (252 aa).

An ABC transporter domain is found at 6–247 (LQIRDLSVYY…PKRKETEDYI (242 aa)). Residue 38–45 (GPSGSGKS) participates in ATP binding.

Belongs to the ABC transporter superfamily. Phosphate importer (TC 3.A.1.7) family. The complex is composed of two ATP-binding proteins (PstB), two transmembrane proteins (PstC and PstA) and a solute-binding protein (PstS).

The protein resides in the cell membrane. The catalysed reaction is phosphate(out) + ATP + H2O = ADP + 2 phosphate(in) + H(+). Part of the ABC transporter complex PstSACB involved in phosphate import. Responsible for energy coupling to the transport system. This is Phosphate import ATP-binding protein PstB 1 from Streptococcus pyogenes serotype M1.